The following is a 780-amino-acid chain: MADVESAGVDDSFAQSEPHDEQQIHNMTVGTRRQPNGTIGSVYSGNKIRHLKKEDGIPLWRKDIQYQFLKLVFEDKTPVFTRWPDGQKNMDFADIYIDAMARSSKTSKILKDKLQSDKQAAINMAMVCLLVNFGRMNTTLNFFPEMRAQLRTYHSIPSLQAHQDPNAYKQLQDAPRLKSILKGASEDVDQPNTLDKIKRENVPRTNPVNLIFVLAQYAPKVSEMHFFPPRDFFDLVMRSTLSSKSRAKAFLWLMWWYLESDFSREAALNNPFGPGLEGEGTGGLPIKVPSFEILTEEQANEENVDTQSEIEYGEEKRLERKRILEEEEPTPRAPKRPKKMPYWEFQYLKQMEPGTKIPSRQFSNKGDAYRAAADSDDLIEFRNPDGSIRSTLKMPRDEDYAYQSGSLDGPSPRIVLRTKAENTPDAASPAPPGSGYPILNRFVTEASPHHQGSSRRPRPLTQHQLAVERNRRQRIEYILAKRKGEAYRLLRAKRLTEIPFARYGRLLQNLPDGYDTDDDKSWGKGGLLPNPEEEEDFGECANYFLSVIRKASRRLDRWDYEHANGPRRDRKKEREERQKAREEAMDFDGDVDGKVSSRSSRARAQRNAKRKLARAAAAASSTPSASTPKTAAARSKGNRSRNPRDEKVAAATSLGANTGLETPSRDDALSPVQGDLEGEESLDDIDRELLGEGSGDEDDIPPRGLEPSRPAELGYDDSFLGGDADDALSSDEEEEEAEDEELDEMDVEGDDNLSAPGGEGRYAASDVSGPEMANGKPGWN.

Disordered stretches follow at residues 1–25 and 563–780; these read MADVESAGVDDSFAQSEPHDEQQIH and ANGP…PGWN. Residues 563-584 show a composition bias toward basic and acidic residues; that stretch reads ANGPRRDRKKEREERQKAREEA. A compositionally biased stretch (basic residues) spans 600–613; that stretch reads SRARAQRNAKRKLA. Residues 614–635 show a composition bias toward low complexity; sequence RAAAAASSTPSASTPKTAAARS. Acidic residues-rich tracts occupy residues 676 to 686 and 723 to 751; these read LEGEESLDDID and DADDALSSDEEEEEAEDEELDEMDVEGDD.

In terms of assembly, component of the chromatin-remodeling INO80 complex.

The protein localises to the nucleus. Probably involved in transcription regulation via its interaction with the INO80 complex, a chromatin-remodeling complex. The polypeptide is Ino eighty subunit 1 (Emericella nidulans (strain FGSC A4 / ATCC 38163 / CBS 112.46 / NRRL 194 / M139) (Aspergillus nidulans)).